A 510-amino-acid chain; its full sequence is MAAAGAMPGGLLLTFLLLAVVASGAYNGAGEPPVSRRSFPKGFIFGTASSSYQYEGGAAEGGRGPSIWDTFTHQHPEKIADRSNGDVASDSYHLYKEDVRLMKDMGMDAYRFSISWTRILPNGSLRGGVNKEGIKYYNNLINELLSKGVQPFITLFHWDSPQALEDKYNGFLSPNIINDFKDYAEICFKEFGDRVKNWITFNEPWTFCSNGYATGLFAPGRCSPWEKGNCSVGDSGREPYTACHHQLLAHAETVRLYKAKYQALQKGKIGITLVSHWFVPFSRSKSNDDAAKRAIDFMFGWFMDPLIRGDYPLSMRGLVGNRLPQFTKEQSKLVKGAFDFIGLNYYTANYADNLPPSNGLNNSYTTDSRANLTGVRNGIPIGPQAASPWLYVYPQGFRDLLLYVKENYGNPTVYITENGVDEFNNKTLPLQEALKDDARIEYYHKHLLSLLSAIRDGANVKGYFAWSLLDNFEWSNGYTVRFGINFVDYNDGRKRYPKNSAHWFKKFLLK.

The first 24 residues, 1–24 (MAAAGAMPGGLLLTFLLLAVVASG), serve as a signal peptide directing secretion. Position 53 (glutamine 53) interacts with a beta-D-glucoside. Asparagine 122 is a glycosylation site (N-linked (GlcNAc...) asparagine). Residues histidine 157 and 202–203 (NE) each bind a beta-D-glucoside. Glutamate 203 acts as the Proton donor in catalysis. 2 disulfides stabilise this stretch: cysteine 208–cysteine 243 and cysteine 222–cysteine 230. Asparagine 229 carries an N-linked (GlcNAc...) asparagine glycan. Tyrosine 346 contributes to the a beta-D-glucoside binding site. N-linked (GlcNAc...) asparagine glycans are attached at residues asparagine 361 and asparagine 371. Glutamate 417 lines the a beta-D-glucoside pocket. Catalysis depends on glutamate 417, which acts as the Nucleophile. Asparagine 425 is a glycosylation site (N-linked (GlcNAc...) asparagine). Residues tryptophan 466, 473–474 (EW), and phenylalanine 482 each bind a beta-D-glucoside.

This sequence belongs to the glycosyl hydrolase 1 family.

The protein resides in the secreted. It carries out the reaction Hydrolysis of terminal, non-reducing beta-D-glucosyl residues with release of beta-D-glucose.. Hydrolyzes p-nitrophenyl beta-D-glucoside, p-nitrophenyl beta-D-galactoside, p-nitrophenyl beta-D-xyloside, p-nitrophenyl beta-D-fucoside, p-nitrophenyl beta-L-arabinoside, cello-oligosaccharides and laminaribiose. This Oryza sativa subsp. japonica (Rice) protein is Beta-glucosidase 12.